A 286-amino-acid polypeptide reads, in one-letter code: Urease accessory protein UreD 2 (286 aa).

The protein belongs to the UreD family. UreD, UreF and UreG form a complex that acts as a GTP-hydrolysis-dependent molecular chaperone, activating the urease apoprotein by helping to assemble the nickel containing metallocenter of UreC. The UreE protein probably delivers the nickel.

It is found in the cytoplasm. Functionally, required for maturation of urease via the functional incorporation of the urease nickel metallocenter. This is Urease accessory protein UreD 2 from Bradyrhizobium sp. (strain ORS 278).